The following is a 372-amino-acid chain: Glutamate 5-kinase (372 aa).

Lys-14 contributes to the ATP binding site. Positions 54, 141, and 153 each coordinate substrate. Thr-173–Asp-174 is an ATP binding site. A PUA domain is found at Arg-280–Met-358.

Belongs to the glutamate 5-kinase family.

The protein resides in the cytoplasm. It catalyses the reaction L-glutamate + ATP = L-glutamyl 5-phosphate + ADP. Its pathway is amino-acid biosynthesis; L-proline biosynthesis; L-glutamate 5-semialdehyde from L-glutamate: step 1/2. Catalyzes the transfer of a phosphate group to glutamate to form L-glutamate 5-phosphate. The polypeptide is Glutamate 5-kinase (Pseudomonas fluorescens (strain Pf0-1)).